The following is a 318-amino-acid chain: RNA polymerase II transcription factor B subunit 3 (318 aa).

The RING-type zinc-finger motif lies at 13 to 54; sequence CPLCQADRYLNPNMKLLINPECYHKMCESCVDRIFTTGPAQC.

As to quaternary structure, one of the nine subunits forming the core-TFIIH basal transcription factor. Also interacts with skp1 and with the mcs2-mcs6 complex.

Its subcellular location is the cytoplasm. The protein localises to the nucleus. Functionally, acts as a component of the general transcription and DNA repair factor IIH (TFIIH or factor B), which is essential for both basal and activated transcription, and is involved in nucleotide excision repair (NER) of damaged DNA. TFIIH has CTD kinase activity and DNA-dependent ATPase activity, and is essential for polymerase II transcription. This Schizosaccharomyces pombe (strain 972 / ATCC 24843) (Fission yeast) protein is RNA polymerase II transcription factor B subunit 3 (pmh1).